The chain runs to 270 residues: Phosphatidylglycerol--prolipoprotein diacylglyceryl transferase (270 aa).

7 consecutive transmembrane segments (helical) span residues V10–I30, L56–Y76, W92–F112, F120–I140, S175–A195, M202–V222, and V237–L257. A 1,2-diacyl-sn-glycero-3-phospho-(1'-sn-glycerol) is bound at residue R139.

This sequence belongs to the Lgt family.

Its subcellular location is the cell inner membrane. It carries out the reaction L-cysteinyl-[prolipoprotein] + a 1,2-diacyl-sn-glycero-3-phospho-(1'-sn-glycerol) = an S-1,2-diacyl-sn-glyceryl-L-cysteinyl-[prolipoprotein] + sn-glycerol 1-phosphate + H(+). The protein operates within protein modification; lipoprotein biosynthesis (diacylglyceryl transfer). In terms of biological role, catalyzes the transfer of the diacylglyceryl group from phosphatidylglycerol to the sulfhydryl group of the N-terminal cysteine of a prolipoprotein, the first step in the formation of mature lipoproteins. This chain is Phosphatidylglycerol--prolipoprotein diacylglyceryl transferase, found in Pseudomonas savastanoi pv. phaseolicola (strain 1448A / Race 6) (Pseudomonas syringae pv. phaseolicola (strain 1448A / Race 6)).